The following is a 428-amino-acid chain: Gamma-glutamyl phosphate reductase (428 aa).

It belongs to the gamma-glutamyl phosphate reductase family.

It is found in the cytoplasm. It carries out the reaction L-glutamate 5-semialdehyde + phosphate + NADP(+) = L-glutamyl 5-phosphate + NADPH + H(+). Its pathway is amino-acid biosynthesis; L-proline biosynthesis; L-glutamate 5-semialdehyde from L-glutamate: step 2/2. Its function is as follows. Catalyzes the NADPH-dependent reduction of L-glutamate 5-phosphate into L-glutamate 5-semialdehyde and phosphate. The product spontaneously undergoes cyclization to form 1-pyrroline-5-carboxylate. In Afipia carboxidovorans (strain ATCC 49405 / DSM 1227 / KCTC 32145 / OM5) (Oligotropha carboxidovorans), this protein is Gamma-glutamyl phosphate reductase.